The sequence spans 606 residues: Mitogen-activated protein kinase 20 (606 aa).

In terms of domain architecture, Protein kinase spans 25–316 (FKVQEVIGKG…AEEALADPYF (292 aa)). ATP contacts are provided by residues 31 to 39 (IGKGSYGVV) and K54. The Proton acceptor role is filled by D151. T187 is subject to Phosphothreonine. Positions 187 to 189 (TDY) match the TXY motif. At Y189 the chain carries Phosphotyrosine. T192 carries the post-translational modification Phosphothreonine.

It belongs to the protein kinase superfamily. CMGC Ser/Thr protein kinase family. MAP kinase subfamily. In terms of processing, dually phosphorylated on Thr-187 and Tyr-189, which activates the enzyme.

The enzyme catalyses L-seryl-[protein] + ATP = O-phospho-L-seryl-[protein] + ADP + H(+). It carries out the reaction L-threonyl-[protein] + ATP = O-phospho-L-threonyl-[protein] + ADP + H(+). With respect to regulation, activated by threonine and tyrosine phosphorylation. This chain is Mitogen-activated protein kinase 20 (MPK20), found in Arabidopsis thaliana (Mouse-ear cress).